The sequence spans 697 residues: MAR-binding filament-like protein 1 (697 aa).

A chloroplast-targeting transit peptide spans 1-41 (MATSCFPPFSASSSSLCSSQFTPLLSCPRNTQICRKKRPVM). A thylakoid-targeting transit peptide spans 42 to 79 (ASMHSENQKESNVCNRRSILFVGFSVLPLLNLRARALE). Residues 80–106 (GLSTDSQAQPQKEETEQTIQGSAGNPF) lie on the Lumenal, thylakoid side of the membrane. The tract at residues 81–100 (LSTDSQAQPQKEETEQTIQG) is disordered. The helical transmembrane segment at 107–127 (VSLLNGLGVVGSGVLGSLYAL) threads the bilayer. Residues 128–697 (ARNEKAVSDA…GEKEKVNVQQ (570 aa)) are Stromal-facing. Positions 203–671 (LQNEKKLAED…KGEILRLRSQ (469 aa)) form a coiled coil. The tract at residues 599–629 (TSRNSSLEDEREVHRQSVSEQKQISQEAQEN) is disordered. Basic and acidic residues predominate over residues 604 to 615 (SLEDEREVHRQS). Positions 616-627 (VSEQKQISQEAQ) are enriched in polar residues.

As to quaternary structure, interacts with MAF1. Interacts with PTST2; the interaction is essential for the initiation of starch granules biosynthesis in leaf chloroplasts, for the correct location of the process in the stromal spaces between the thylakoid membranes, and for the association of PTST2 with the thylakoid membranes. Phosphorylated in vitro by human casein kinase II. In terms of processing, predicted to be translocated into the thylakoid by the Tat system.

The protein resides in the plastid. Its subcellular location is the chloroplast. The protein localises to the chloroplast thylakoid membrane. It is found in the chloroplast stroma. It localises to the chloroplast nucleoid. The protein resides in the nucleus. Its subcellular location is the nucleus matrix. In terms of biological role, required for the initiation of starch granules biosynthesis in leaf chloroplasts. Anchored to the thylakoid membranes with its C-terminus facing into the stroma where it is essential for localizing PTST2 and SS4 to the stromal spaces between the thylakoid membranes in order to begin starch granule formation. Associated with leaf chloroplastic nucleoids in vivo. Binds to various chloroplastic double-stranded DNA fragments without particular sequence specificity in vitro. May function at the interface between nucleoids and thylakoids possibly by anchoring nucleoids to the thylakoid membrane system in mature chloroplasts. Binds nuclear DNA. Interacts with chromatin via matrix attachment regions (MARs). Likely to participate in nuclear architecture by connecting chromatin with the nuclear matrix and potentially with the nuclear envelope. The sequence is that of MAR-binding filament-like protein 1 from Solanum lycopersicum (Tomato).